A 517-amino-acid polypeptide reads, in one-letter code: Acetyl-coenzyme A carboxylase carboxyl transferase subunit beta, chloroplastic (517 aa).

4 stretches are compositionally biased toward basic and acidic residues: residues 1–17 (MKPT…KSNE), 24–41 (GDNK…KSNE), 48–65 (GDNK…KSNE), and 72–81 (GDKQKDKKDG). Disordered stretches follow at residues 1–179 (MKPT…KEEE) and 204–234 (KHRD…DSEA). A compositionally biased stretch (acidic residues) spans 87–131 (YDDEYEEDLEYDDEYEEDLEYDDEYEEDLEYDDEEYDDEYEEDLE). Basic and acidic residues-rich tracts occupy residues 132–179 (GDNK…KEEE) and 209–229 (KSVP…RDTD). The 272-residue stretch at 243-514 (LWVHCKLCSG…NSQVINIYNY (272 aa)) folds into the CoA carboxyltransferase N-terminal domain. Positions 247, 250, 266, and 269 each coordinate Zn(2+). The C4-type zinc finger occupies 247 to 269 (CKLCSGFNYKKILKSKNNVCEQC).

Belongs to the AccD/PCCB family. As to quaternary structure, acetyl-CoA carboxylase is a heterohexamer composed of biotin carboxyl carrier protein, biotin carboxylase and 2 subunits each of ACCase subunit alpha and ACCase plastid-coded subunit beta (accD). Requires Zn(2+) as cofactor.

It is found in the plastid. It localises to the chloroplast stroma. The enzyme catalyses N(6)-carboxybiotinyl-L-lysyl-[protein] + acetyl-CoA = N(6)-biotinyl-L-lysyl-[protein] + malonyl-CoA. Its pathway is lipid metabolism; malonyl-CoA biosynthesis; malonyl-CoA from acetyl-CoA: step 1/1. Functionally, component of the acetyl coenzyme A carboxylase (ACC) complex. Biotin carboxylase (BC) catalyzes the carboxylation of biotin on its carrier protein (BCCP) and then the CO(2) group is transferred by the transcarboxylase to acetyl-CoA to form malonyl-CoA. The polypeptide is Acetyl-coenzyme A carboxylase carboxyl transferase subunit beta, chloroplastic (Oenothera elata subsp. hookeri (Hooker's evening primrose)).